The primary structure comprises 1634 residues: Leucine-rich repeat-containing protein 37A3 (1634 aa).

Positions 1-35 are cleaved as a signal peptide; that stretch reads MTSAQCPALACVMSPLRFWGPWPLLMWQLLWLLVK. Topologically, residues 36 to 1581 are extracellular; that stretch reads EAQPLEWVKD…ELPGYGYTKK (1546 aa). Disordered stretches follow at residues 53–104, 129–154, 172–531, 619–642, and 758–777; these read PLGP…ESTE, SQQD…KKDP, TPQS…VVVA, PEPT…KHPE, and EPTT…APRP. Residues 137-160 form an LRR 1 repeat; the sequence is LSPQERLPVSPKKLKKDPAQRWSL. Composition is skewed to polar residues over residues 172 to 189 and 223 to 237; these read TPQS…STDT and ETQN…QSSS. LRR repeat units follow at residues 230 to 253 and 267 to 290; these read LEDI…LEEE and ESSM…EDQA. The segment covering 238-249 has biased composition (low complexity); the sequence is LQQEAPAQLPQL. Asparagine 296 carries an N-linked (GlcNAc...) asparagine glycan. Polar residues predominate over residues 307 to 326; the sequence is TITSEPTNETESSQAQQETP. Over residues 358 to 368 the composition is skewed to low complexity; the sequence is SEQQQPVQPSE. The span at 433–446 shows a compositional bias: polar residues; the sequence is LVHQEATTRLSGSG. A compositionally biased stretch (low complexity) spans 482–493; it reads SPEPINNENPSP. Over residues 760–770 the composition is skewed to polar residues; it reads TTETGHSTALE. LRR repeat units follow at residues 864 to 887, 888 to 911, 912 to 935, 937 to 959, 963 to 987, and 1002 to 1027; these read NGTF…VWKA, YSWT…SFEG, LLSL…TFEP, PFLK…TFQA, MQFL…LFKL, and LTTL…MACC. Asparagine 1079 carries an N-linked (GlcNAc...) asparagine glycan. 2 LRR repeats span residues 1124-1146 and 1151-1176; these read LPYF…KLPT and LAKI…SIQK. Basic and acidic residues-rich tracts occupy residues 1181–1191 and 1201–1216; these read EVGRQSIRREQ and AEEK…ELKQ. 2 disordered regions span residues 1181-1227 and 1306-1329; these read EVGR…EKLA and RFHK…KVRK. Residues 1359–1384 form an LRR 12 repeat; the sequence is FSSLRDLSPQENPFLEVSAPSEHFIE. A helical membrane pass occupies residues 1582–1602; that stretch reads LILALIVTGILTILIILLCLI. Over 1603-1634 the chain is Cytoplasmic; it reads EICCHRRSLQEDEEGFSRDSEAPTEEESEALP. The disordered stretch occupies residues 1614–1634; it reads DEEGFSRDSEAPTEEESEALP. The span at 1624–1634 shows a compositional bias: acidic residues; sequence APTEEESEALP.

This sequence belongs to the LRRC37A family.

The protein localises to the membrane. This is Leucine-rich repeat-containing protein 37A3 (LRRC37A3) from Homo sapiens (Human).